The following is a 417-amino-acid chain: MLNNSRLCIIWLFGLISGFNLMITGNTLNYWLAKEDIALQTIGILSFITLPYSINFLLAPIFDAVQIKYLNKIFGHRLSWICLTSSALIFLIYIFSFLDPSTNLLLFAFTALIISFFSAAQDTILSALRTEIVPKESLGFTSGIYIFGYRVGMLLAGSGAIYLSIYLTFNEIYKIFAGLVFIYLILLIVGIKYCDLNENIHIQIIKNDIKNNQNKKNIINFIYNALKPIGSVYFIILILIFLVLYRLPDNLINVMINPFLLHLEYDAFEIASVGKFCGVVGAIIGGLVGGVIMKHKNILNSIFLFGIIHALGHILFIFLEINGKNSLLLFITIGIASITGGMTMTAYIAFISALCQGKFRATQYSFLSSMMGISRSIFPIISGYMVVNFGWQNFFLFTTIITIPSLLILLKIKTKLQ.

The next 12 membrane-spanning stretches (helical) occupy residues 7–27 (LCII…TGNT), 42–62 (IGIL…APIF), 78–98 (LSWI…FSFL), 104–124 (LLLF…QDTI), 143–163 (GIYI…AIYL), 171–191 (EIYK…IVGI), 225–245 (ALKP…LVLY), 273–293 (VGKF…GVIM), 301–321 (SIFL…FLEI), 328–348 (LLFI…TAYI), 366–386 (FLSS…GYMV), and 389–409 (FGWQ…LLIL).

This sequence belongs to the major facilitator superfamily.

Its subcellular location is the cell inner membrane. This Rickettsia conorii (strain ATCC VR-613 / Malish 7) protein is Putative transporter AmpG 1 (ampG1).